A 436-amino-acid chain; its full sequence is Adenylosuccinate synthetase (436 aa).

Residues 12 to 18 (GDEGKGK) and 40 to 42 (GHT) contribute to the GTP site. Asp13 acts as the Proton acceptor in catalysis. 2 residues coordinate Mg(2+): Asp13 and Gly40. Residues 13 to 16 (DEGK), 38 to 41 (NAGH), Thr130, Arg144, Gln230, Thr245, and Arg309 contribute to the IMP site. His41 (proton donor) is an active-site residue. 305-311 (TTTGRPR) serves as a coordination point for substrate. Residues Arg311, 337–339 (KLD), and 419–421 (SVG) contribute to the GTP site.

Belongs to the adenylosuccinate synthetase family. Homodimer. Mg(2+) serves as cofactor.

The protein resides in the cytoplasm. It carries out the reaction IMP + L-aspartate + GTP = N(6)-(1,2-dicarboxyethyl)-AMP + GDP + phosphate + 2 H(+). The protein operates within purine metabolism; AMP biosynthesis via de novo pathway; AMP from IMP: step 1/2. Plays an important role in the de novo pathway of purine nucleotide biosynthesis. Catalyzes the first committed step in the biosynthesis of AMP from IMP. This Myxococcus xanthus (strain DK1622) protein is Adenylosuccinate synthetase.